We begin with the raw amino-acid sequence, 386 residues long: Phosphoglycerate kinase (386 aa).

Residues 21–23, Arg-36, 59–62, Arg-112, and Arg-145 each bind substrate; these read DLN and HLGR. ATP-binding positions include Lys-196, Glu-313, and 339–342; that span reads GGDT.

Belongs to the phosphoglycerate kinase family. As to quaternary structure, monomer.

It localises to the cytoplasm. The catalysed reaction is (2R)-3-phosphoglycerate + ATP = (2R)-3-phospho-glyceroyl phosphate + ADP. It functions in the pathway carbohydrate degradation; glycolysis; pyruvate from D-glyceraldehyde 3-phosphate: step 2/5. The polypeptide is Phosphoglycerate kinase (Haemophilus influenzae (strain PittGG)).